A 439-amino-acid chain; its full sequence is Putative myrosinase 3 (439 aa).

A signal peptide spans Met1–Ala19. The N-linked (GlcNAc...) asparagine glycan is linked to Asn33. A beta-D-glucoside is bound by residues His145, Asn190–Gln191, and Tyr316. Residue Asn336 is glycosylated (N-linked (GlcNAc...) asparagine). Residues Glu386 and Trp404 each coordinate a beta-D-glucoside. The active-site Nucleophile is the Glu386.

The protein belongs to the glycosyl hydrolase 1 family. Expressed specifically in stamens and petals.

The enzyme catalyses a thioglucoside + H2O = a sugar + a thiol.. The sequence is that of Putative myrosinase 3 from Arabidopsis thaliana (Mouse-ear cress).